A 507-amino-acid chain; its full sequence is Mitochondrial antiviral-signaling protein (507 aa).

The Cytoplasmic portion of the chain corresponds to 1 to 482; sequence MTFAEEKTYK…PCASSVSWAK (482 aa). Glycyl lysine isopeptide (Lys-Gly) (interchain with G-Cter in ubiquitin) cross-links involve residues K7 and K10. In terms of domain architecture, CARD spans 10–77; the sequence is KYIRYNHSKF…WVEVFIRALR (68 aa). Positions 10 to 77 are required for interaction with NLRX1; that stretch reads KYIRYNHSKF…WVEVFIRALR (68 aa). A lipid anchor (S-palmitoyl cysteine) is attached at C79. 3 disordered regions span residues 123–238, 250–326, and 350–401; these read FAAG…TNLS, TTLS…NIAP, and ASAS…SKPG. Residues 143–147 are interaction with TRAF2; that stretch reads PVQDT. S152, S157, S172, S178, S186, and S220 each carry phosphoserine. The segment at 153–158 is interaction with TRAF6; sequence PVENSE. At R234 the chain carries Asymmetric dimethylarginine. Composition is skewed to low complexity over residues 250-266 and 281-293; these read TTLSSSSTGSAFAKGAG and VPTNSVTTSSVPS. Phosphoserine is present on S256. A compositionally biased stretch (polar residues) spans 300–325; that stretch reads NTMSSKLPISTKSTAATPSTVPTNIA. K305 is covalently cross-linked (Glycyl lysine isopeptide (Lys-Gly) (interchain with G-Cter in ubiquitin)). The segment at 340–507 is interaction with DHX33; it reads PSKVTASVAK…MLYRSRHLAQ (168 aa). Positions 359–368 are enriched in basic and acidic residues; the sequence is RNNKQAKETL. Residues 374–391 are compositionally biased toward polar residues; it reads VVTTGSSLTRPDISSRSL. S387 is modified (phosphoserine). Residues 419 to 422 carry the pLxIS motif motif; the sequence is LAIS. S422 bears the Phosphoserine; by TBK1 mark. Positions 423 to 474 are disordered; sequence PSTSLGSEPNHGPEENEYSSFRIQVDKSPSVDLLGSPEPLATQQSPEEEEPC. Residues 435–440 are interaction with TRAF6; it reads PEENEY. Residues 483–500 form a helical membrane-spanning segment; the sequence is WLGATSALLAAFLAVMLY. Over 501–507 the chain is Mitochondrial intermembrane; the sequence is RSRHLAQ.

As to quaternary structure, self-associates and polymerizes (via CARD domains) to form 400 nM long three-stranded helical filaments on mitochondria, filament nucleation requires interaction with RIGI whose CARD domains act as a template for filament assembly. Interacts with RIGI, IFIH1/MDA5, TRAF2, TRAF6 and C1QBP. May interact with FADD, RIPK1, CHUK and IKBKB. Interacts (when phosphorylated) with IRF3; following activation and phosphorylation on the pLxIS motif by TBK1, recruits IRF3. Interacts with NLRX1. Interaction with NLRX1 requires the CARD domain. Interacts with PSMA7. Interacts with TRAFD1. Interacts (via C-terminus) with PCBP2 in a complex containing MAVS/IPS1, PCBP2 and ITCH. Interacts with CYLD. Interacts with SRC. Interacts with DHX58/LGP2 and IKBKE. Interacts with STING1. Interacts with IFIT3 (via N-terminus). Interacts with TBK1 only in the presence of IFIT3. Interacts with TTLL12; the interaction prevents MAVS binding to TBK1 and IKBKE. Interacts with MUL1. Interacts with ANKRD17. Interacts with NDFIP1. Interacts with SMURF1; the interaction is mediated by NDFIP1 and leads to MAVS ubiquitination and degradation. Interacts with UBXN1; this interaction inhibits MAVS-mediated antiviral pathway. Interacts (via C-terminus) with GPATCH3; the interaction is markedly increased upon viral infection. Directly interacts (via CARD domain) with ATG5 and ATG12, either as ATG5 and ATG12 monomers or as ATG12-ATG5 conjugates. Interacts with DHX33 (via the helicase C-terminal domain). Interacts with DDX3X (via C-terminus); this interaction may occur rapidly, but transiently after viral infection. The interaction with DDX3X potentiates MAVS-mediated IFNB induction. Conversely inhibition of this interaction prevents MAVS-mediated IFNB induction. Transiently interacts with TRAF3 early during viral infection. Interacts with CLPB. Interacts with TRAF3IP3. Interacts with TOMM70; the interaction is enhanced by virus infection. Interacts with ZNFX1. Interacts with DHX15. Interacts with N4BP3; this interaction promotes the polyubiquitination of MAVS. Interacts with TAX1BP1; this interaction induces MAVS polyubiquitination. Interacts with NLRP3; promoting NLRP3 recruitment to mitochondria and activation of the NLRP3 inflammasome. Interacts with ECSIT; this interaction bridges RIGI to the MAVS complex at the mitochondrion. Interacts with UBL7; this interaction promotes MAVS 'Lys-27'-linked ubiquitination leading to type I interferon production. Interacts (via transmembrane domain) with SMIM30/MAVI1 (via transmembrane domain); the interaction disrupts MAVS interaction with RIGI and inhibits MAVS aggregation, resulting in the repression of type I interferon signaling and innate immune responses. Following activation, phosphorylated by TBK1 at Ser-422 in the pLxIS motif. The phosphorylated pLxIS motif constitutes an IRF3-binding motif, leading to recruitment of the transcription factor IRF3 to induce type-I interferons and other cytokines. In terms of processing, ubiquitinated. Undergoes 'Lys-48'-linked polyubiquitination catalyzed by ITCH; ITCH-dependent polyubiquitination is mediated by the interaction with PCBP2 and leads to MAVS/IPS1 proteasomal degradation. Ubiquitinated by RNF125, leading to its degradation by the proteasome. Undergoes 'Lys-48'-linked ubiquitination catalyzed by SMURF1. Undergoes 'Lys-48'-linked ubiquitination catalyzed by MARCHF5 at Lys-7, leading to proteasomal degradation. Ubiquitinated via 'Lys-63'-linked ubiquitination at Lys-10 by TRIM31, promoting MAVS polymerization and formation of three-stranded helical filaments on mitochondria. Undergoes 'Lys-63'-linked ubiquitination leading to enhanced interaction between MAVS and TRAF2. Undergoes 'Lys-27'-linked ubiquitination by UBE2N and TRIM21 leading to enhanced interaction between MAVS and TBK1. Deubiquitinated by USP10 leading to attenuation of RIGI-mediated MAVS aggregation and production of type I interferon. Undergoes 'Lys-48'-linked polyubiquitination catalyzed by RNF115 leading to its degradation. Post-translationally, proteolytically cleaved by apoptotic caspases during apoptosis, leading to its inactivation. Cleavage by CASP3 during virus-induced apoptosis inactivates it, preventing cytokine overproduction. Palmitoylated by ZHDDC4. Palmitoylation promotes MAVS stabilization and activation by inhibiting 'Lys-48'- but facilitating 'Lys-63'-linked ubiquitination.

It localises to the mitochondrion outer membrane. The protein resides in the mitochondrion. The protein localises to the peroxisome. In terms of biological role, adapter required for innate immune defense against viruses. Acts downstream of DHX33, RIGI and IFIH1/MDA5, which detect intracellular dsRNA produced during viral replication, to coordinate pathways leading to the activation of NF-kappa-B, IRF3 and IRF7, and to the subsequent induction of antiviral cytokines such as IFN-beta and RANTES (CCL5). Peroxisomal and mitochondrial MAVS act sequentially to create an antiviral cellular state. Upon viral infection, peroxisomal MAVS induces the rapid interferon-independent expression of defense factors that provide short-term protection, whereas mitochondrial MAVS activates an interferon-dependent signaling pathway with delayed kinetics, which amplifies and stabilizes the antiviral response. May activate the same pathways following detection of extracellular dsRNA by TLR3. May protect cells from apoptosis. Involved in NLRP3 inflammasome activation by mediating NLRP3 recruitment to mitochondria. This is Mitochondrial antiviral-signaling protein (Mavs) from Rattus norvegicus (Rat).